The sequence spans 537 residues: Chaperonin GroEL 2 (537 aa).

Residues 29-32, 86-90, Gly-413, 477-479, and Asp-493 contribute to the ATP site; these read TLGP, DGTTT, and NAA.

This sequence belongs to the chaperonin (HSP60) family. Forms a cylinder of 14 subunits composed of two heptameric rings stacked back-to-back. Interacts with the co-chaperonin GroES.

Its subcellular location is the cytoplasm. The enzyme catalyses ATP + H2O + a folded polypeptide = ADP + phosphate + an unfolded polypeptide.. Its function is as follows. Together with its co-chaperonin GroES, plays an essential role in assisting protein folding. The GroEL-GroES system forms a nano-cage that allows encapsulation of the non-native substrate proteins and provides a physical environment optimized to promote and accelerate protein folding. The sequence is that of Chaperonin GroEL 2 from Rhodococcus jostii (strain RHA1).